The sequence spans 520 residues: Cytochrome P450 4F3 (520 aa).

A helical transmembrane segment spans residues L11–L31. 2 residues coordinate heme: E328 and C468.

This sequence belongs to the cytochrome P450 family. Heme is required as a cofactor. In terms of tissue distribution, selectively expressed in blood neutrophils and bone marrow cells. Coexpressed with CYP4F3B in prostate, ileum and trachea. Selectively expressed in liver and kidney. It is also the predominant CYP4F isoform in trachea and tissues of the gastrointestinal tract.

It is found in the endoplasmic reticulum membrane. The protein resides in the microsome membrane. It carries out the reaction an organic molecule + reduced [NADPH--hemoprotein reductase] + O2 = an alcohol + oxidized [NADPH--hemoprotein reductase] + H2O + H(+). The enzyme catalyses leukotriene B4 + reduced [NADPH--hemoprotein reductase] + O2 = 20-hydroxy-leukotriene B4 + oxidized [NADPH--hemoprotein reductase] + H2O + H(+). The catalysed reaction is 20-hydroxy-leukotriene B4 + reduced [NADPH--hemoprotein reductase] + O2 = 20-oxo-leukotriene B4 + oxidized [NADPH--hemoprotein reductase] + 2 H2O + H(+). It catalyses the reaction 20-oxo-leukotriene B4 + reduced [NADPH--hemoprotein reductase] + O2 = 20-carboxy-leukotriene B4 + oxidized [NADPH--hemoprotein reductase] + H2O + 2 H(+). It carries out the reaction (5Z,8Z,11Z)-eicosatrienoate + reduced [NADPH--hemoprotein reductase] + O2 = 20-hydroxy-(5Z,8Z,11Z)-eicosatrienoate + oxidized [NADPH--hemoprotein reductase] + H2O + H(+). The enzyme catalyses (5Z,8Z,11Z,14Z)-eicosatetraenoate + reduced [NADPH--hemoprotein reductase] + O2 = 20-hydroxy-(5Z,8Z,11Z,14Z)-eicosatetraenoate + oxidized [NADPH--hemoprotein reductase] + H2O + H(+). The catalysed reaction is (5Z,8Z,11Z,14Z,17Z)-eicosapentaenoate + reduced [NADPH--hemoprotein reductase] + O2 = 19-hydroxy-(5Z,8Z,11Z,14Z,17Z)-eicosapentaenoate + oxidized [NADPH--hemoprotein reductase] + H2O + H(+). It catalyses the reaction (5Z,8Z,11Z,14Z,17Z)-eicosapentaenoate + reduced [NADPH--hemoprotein reductase] + O2 = 20-hydroxy-(5Z,8Z,11Z,14Z,17Z)-eicosapentaenoate + oxidized [NADPH--hemoprotein reductase] + H2O + H(+). It carries out the reaction (4Z,7Z,10Z,13Z,16Z,19Z)-docosahexaenoate + reduced [NADPH--hemoprotein reductase] + O2 = 21-hydroxy-(4Z,7Z,10Z,13Z,16Z,19Z)-docosahexaenoate + oxidized [NADPH--hemoprotein reductase] + H2O + H(+). The enzyme catalyses (4Z,7Z,10Z,13Z,16Z,19Z)-docosahexaenoate + reduced [NADPH--hemoprotein reductase] + O2 = 22-hydroxy-(4Z,7Z,10Z,13Z,16Z,19Z)-docosahexaenoate + oxidized [NADPH--hemoprotein reductase] + H2O + H(+). The catalysed reaction is 8,9-epoxy-(5Z,11Z,14Z)-eicosatrienoate + reduced [NADPH--hemoprotein reductase] + O2 = 20-hydroxy-8,9-epoxy-(5Z,11Z,14Z)-eicosatrienoate + oxidized [NADPH--hemoprotein reductase] + H2O + H(+). It catalyses the reaction 11,12-epoxy-(5Z,8Z,14Z)-eicosatrienoate + reduced [NADPH--hemoprotein reductase] + O2 = 20-hydroxy-11,12-epoxy-(5Z,8Z,14Z)-eicosatrienoate + oxidized [NADPH--hemoprotein reductase] + H2O + H(+). It carries out the reaction 14,15-epoxy-(5Z,8Z,11Z)-eicosatrienoate + reduced [NADPH--hemoprotein reductase] + O2 = 20-hydroxy-14,15-epoxy-(5Z,8Z,11Z)-eicosatrienoate + oxidized [NADPH--hemoprotein reductase] + H2O + H(+). The enzyme catalyses 12,13-epoxy-(9Z)-octadecenoate + reduced [NADPH--hemoprotein reductase] + O2 = 18-hydroxy-12,13-epoxy-(9Z)-octadecenoate + oxidized [NADPH--hemoprotein reductase] + H2O + H(+). The catalysed reaction is 9,10-epoxy-(12Z)-octadecenoate + reduced [NADPH--hemoprotein reductase] + O2 = 18-hydroxy-9,10-epoxy-(12Z)-octadecenoate + oxidized [NADPH--hemoprotein reductase] + H2O + H(+). It catalyses the reaction 9,10-epoxyoctadecanoate + reduced [NADPH--hemoprotein reductase] + O2 = 18-hydroxy-9,10-epoxy-octadecanoate + oxidized [NADPH--hemoprotein reductase] + H2O + H(+). It carries out the reaction (12R)-hydroxy-(9Z)-octadecenoate + reduced [NADPH--hemoprotein reductase] + O2 = (12R),18-dihydroxy-(9Z)-octadecenoate + oxidized [NADPH--hemoprotein reductase] + H2O + H(+). The enzyme catalyses 12-hydroxyoctadecanoate + reduced [NADPH--hemoprotein reductase] + O2 = 12,18-dihydroxyoctadecanoate + oxidized [NADPH--hemoprotein reductase] + H2O + H(+). The catalysed reaction is 5-hydroxy-(6E,8Z,11Z,14Z)-eicosatetraenoate + reduced [NADPH--hemoprotein reductase] + O2 = 5,20-dihydroxy-(6E,8Z,11Z,14Z)-eicosatetraenoate + oxidized [NADPH--hemoprotein reductase] + H2O + H(+). It catalyses the reaction 8-hydroxy-(5Z,9E,11Z,14Z)-eicosatetraenoate + reduced [NADPH--hemoprotein reductase] + O2 = 8,20-dihydroxy-(5Z,9E,11Z,14Z)-eicosatetraenoate + oxidized [NADPH--hemoprotein reductase] + H2O + H(+). It carries out the reaction 12-hydroxy-(5Z,8Z,10E,14Z)-eicosatetraenoate + reduced [NADPH--hemoprotein reductase] + O2 = 12,20-dihydroxy-(5Z,8Z,10E,14Z)-eicosatetraenoate + oxidized [NADPH--hemoprotein reductase] + H2O + H(+). The enzyme catalyses 5-hydroxy-(6E,8Z,11Z,14Z,17Z)-eicosapentaenoate + reduced [NADPH--hemoprotein reductase] + O2 = 5,20-dihydroxy-(6E,8Z,11Z,14Z,17Z)-eicosapentaenoate + oxidized [NADPH--hemoprotein reductase] + H2O + H(+). The catalysed reaction is lipoxin A4 + reduced [NADPH--hemoprotein reductase] + O2 = 20-hydroxy-lipoxin A4 + oxidized [NADPH--hemoprotein reductase] + H2O + H(+). It catalyses the reaction lipoxin B4 + reduced [NADPH--hemoprotein reductase] + O2 = 20-hydroxy-lipoxin B4 + oxidized [NADPH--hemoprotein reductase] + H2O + H(+). It carries out the reaction 22-hydroxydocosanoate + reduced [NADPH--hemoprotein reductase] + O2 = 22-oxodocosanoate + oxidized [NADPH--hemoprotein reductase] + 2 H2O + H(+). The enzyme catalyses 22-oxodocosanoate + reduced [NADPH--hemoprotein reductase] + O2 = docosanedioate + oxidized [NADPH--hemoprotein reductase] + H2O + 2 H(+). The catalysed reaction is docosanoate + reduced [NADPH--hemoprotein reductase] + O2 = 22-hydroxydocosanoate + oxidized [NADPH--hemoprotein reductase] + H2O + H(+). It catalyses the reaction tetracosanoate + reduced [NADPH--hemoprotein reductase] + O2 = 24-hydroxytetracosanoate + oxidized [NADPH--hemoprotein reductase] + H2O + H(+). It carries out the reaction hexacosanoate + reduced [NADPH--hemoprotein reductase] + O2 = 26-hydroxyhexacosanoate + oxidized [NADPH--hemoprotein reductase] + H2O + H(+). The enzyme catalyses 26-hydroxyhexacosanoate + reduced [NADPH--hemoprotein reductase] + O2 = 26-oxohexacosanoate + oxidized [NADPH--hemoprotein reductase] + 2 H2O + H(+). The catalysed reaction is 26-oxohexacosanoate + reduced [NADPH--hemoprotein reductase] + O2 = hexacosanedioate + oxidized [NADPH--hemoprotein reductase] + H2O + 2 H(+). It catalyses the reaction 3-hydroxyoctadecanoate + reduced [NADPH--hemoprotein reductase] + O2 = 3,18-dihydroxyoctadecanoate + oxidized [NADPH--hemoprotein reductase] + H2O + H(+). It carries out the reaction 3-hydroxyhexadecanoate + reduced [NADPH--hemoprotein reductase] + O2 = 3,16-dihydroxyhexadecanoate + oxidized [NADPH--hemoprotein reductase] + H2O + H(+). Its pathway is lipid metabolism; leukotriene B4 degradation. It functions in the pathway lipid metabolism; arachidonate metabolism. Inhibited by carbon monoxide (CO). Functionally, a cytochrome P450 monooxygenase involved in the metabolism of various endogenous substrates, including fatty acids and their oxygenated derivatives (oxylipins). Mechanistically, uses molecular oxygen inserting one oxygen atom into a substrate, and reducing the second into a water molecule, with two electrons provided by NADPH via cytochrome P450 reductase (CPR; NADPH-ferrihemoprotein reductase). May play a role in inactivation of pro-inflammatory and anti-inflammatory oxylipins during the resolution of inflammation. Catalyzes predominantly the oxidation of the terminal carbon (omega-oxidation) of oxylipins in myeloid cells, displaying higher affinity for arachidonate metabolite leukotriene B4 (LTB4). Inactivates LTB4 via three successive oxidative transformations to 20-hydroxy-LTB4, then to 20-oxo-LTB4 and to 20-carboxy-LTB4. Has omega-hydroxylase activity toward long-chain fatty acid epoxides with preference for 8,9-epoxy-(5Z,11Z,14Z)-eicosatrienoate (EET) and 9,10-epoxyoctadecanoate. Omega-hydroxylates monohydroxy polyunsaturated fatty acids (PUFAs), including hydroxyeicosatetraenoates (HETEs) and hydroxyeicosapentaenoates (HEPEs), to dihydroxy compounds. Contributes to the degradation of saturated very long-chain fatty acids (VLCFAs) such as docosanoic acid, by catalyzing successive omega-oxidations to the corresponding dicarboxylic acid, thereby initiating chain shortening. Has low hydroxylase activity toward PUFAs. Its function is as follows. Catalyzes predominantly the oxidation of the terminal carbon (omega-oxidation) of polyunsaturated fatty acids (PUFAs). Participates in the conversion of arachidonic acid to 20-hydroxyeicosatetraenoic acid (20-HETE), a signaling molecule acting both as vasoconstrictive and natriuretic with overall effect on arterial blood pressure. Has high omega-hydroxylase activity toward other PUFAs, including eicosatrienoic acid (ETA), eicosapentaenoic acid (EPA) and docosahexaenoic acid (DHA). Can also catalyze the oxidation of the penultimate carbon (omega-1 oxidation) of PUFAs with lower efficiency. Contributes to the degradation of saturated very long-chain fatty acids (VLCFAs) such as docosanoic acid and hexacosanoic acid, by catalyzing successive omega-oxidations to the corresponding dicarboxylic acids, thereby initiating chain shortening. Omega-hydroxylates long-chain 3-hydroxy fatty acids, likely initiating the oxidative conversion to the corresponding 3-hydroxydicarboxylic fatty acids. Has omega-hydroxylase activity toward long-chain fatty acid epoxides with preference for 8,9-epoxy-(5Z,11Z,14Z)-eicosatrienoate (EET) and 9,10-epoxyoctadecanoate. The sequence is that of Cytochrome P450 4F3 from Homo sapiens (Human).